The sequence spans 591 residues: Protein NRT1/ PTR FAMILY 4.3 (591 aa).

A compositionally biased stretch (polar residues) spans 1-10; sequence MAEINKQSNK. Residues 1 to 38 form a disordered region; it reads MAEINKQSNKWEQEEVSNENNWELAEEESVDWRGRPSN. A run of 12 helical transmembrane segments spans residues 47–67, 85–105, 109–129, 157–177, 204–224, 233–253, 347–367, 395–415, 429–449, 463–483, 502–522, and 551–571; these read AALF…AVGN, ANIV…GGYL, FLGS…GFIL, GFKA…SGCV, FNAA…LLVW, IGFG…VSGT, LISL…LAQL, AIPY…LVPF, LTRI…AAML, ILSI…EMFT, FLMA…SVLV, and LFYW…LFWS.

This sequence belongs to the major facilitator superfamily. Proton-dependent oligopeptide transporter (POT/PTR) (TC 2.A.17) family. Expressed in flowers. Detected in roots and siliques.

It localises to the membrane. The protein is Protein NRT1/ PTR FAMILY 4.3 (NPF4.3) of Arabidopsis thaliana (Mouse-ear cress).